An 84-amino-acid chain; its full sequence is Cytochrome b559 subunit alpha (84 aa).

The chain crosses the membrane as a helical span at residues 22-36 (IIHSITIPSLFVAGF). H24 contacts heme.

It belongs to the PsbE/PsbF family. In terms of assembly, heterodimer of an alpha subunit and a beta subunit. PSII is composed of 1 copy each of membrane proteins PsbA, PsbB, PsbC, PsbD, PsbE, PsbF, PsbH, PsbI, PsbJ, PsbK, PsbL, PsbM, PsbT, PsbX, PsbY, PsbZ, Psb30/Ycf12, at least 3 peripheral proteins of the oxygen-evolving complex and a large number of cofactors. It forms dimeric complexes. Requires heme b as cofactor.

The protein resides in the plastid. It is found in the chloroplast thylakoid membrane. Its function is as follows. This b-type cytochrome is tightly associated with the reaction center of photosystem II (PSII). PSII is a light-driven water:plastoquinone oxidoreductase that uses light energy to abstract electrons from H(2)O, generating O(2) and a proton gradient subsequently used for ATP formation. It consists of a core antenna complex that captures photons, and an electron transfer chain that converts photonic excitation into a charge separation. This chain is Cytochrome b559 subunit alpha, found in Emiliania huxleyi (Coccolithophore).